A 45-amino-acid chain; its full sequence is Photosystem II reaction center protein K (45 aa).

Positions 1-8 (MELMLLFA) are excised as a propeptide. Residues 24–44 (LPVIPVLFLALAFVWQASVGF) traverse the membrane as a helical segment.

It belongs to the PsbK family. In terms of assembly, PSII is composed of 1 copy each of membrane proteins PsbA, PsbB, PsbC, PsbD, PsbE, PsbF, PsbH, PsbI, PsbJ, PsbK, PsbL, PsbM, PsbT, PsbX, PsbY, PsbZ, Psb30/Ycf12, peripheral proteins PsbO, CyanoQ (PsbQ), PsbU, PsbV and a large number of cofactors. It forms dimeric complexes.

It localises to the cellular thylakoid membrane. Its function is as follows. One of the components of the core complex of photosystem II (PSII). PSII is a light-driven water:plastoquinone oxidoreductase that uses light energy to abstract electrons from H(2)O, generating O(2) and a proton gradient subsequently used for ATP formation. It consists of a core antenna complex that captures photons, and an electron transfer chain that converts photonic excitation into a charge separation. This is Photosystem II reaction center protein K from Cyanothece sp. (strain PCC 7425 / ATCC 29141).